We begin with the raw amino-acid sequence, 212 residues long: ER lumen protein-retaining receptor 1 (212 aa).

Residues methionine 1–phenylalanine 4 are Lumenal-facing. The helical transmembrane segment at arginine 5 to tryptophan 24 threads the bilayer. Topologically, residues lysine 25–isoleucine 32 are cytoplasmic. Residues serine 33 to phenylalanine 52 form a helical membrane-spanning segment. Residues arginine 47–tyrosine 48 form an interaction with the K-D-E-L motif on target proteins region. Residues threonine 53–leucine 58 are Lumenal-facing. A helical membrane pass occupies residues tyrosine 59–tyrosine 79. At serine 80–threonine 92 the chain is on the cytoplasmic side. A helical membrane pass occupies residues phenylalanine 93 to asparagine 110. Topologically, residues histidine 111–leucine 116 are lumenal. A helical membrane pass occupies residues glutamate 117–leucine 135. Residues phenylalanine 136–serine 149 lie on the Cytoplasmic side of the membrane. The helical transmembrane segment at histidine 150–tryptophan 168 threads the bilayer. Residues arginine 159–arginine 169 form an interaction with the K-D-E-L motif on target proteins region. Residues arginine 169–leucine 178 lie on the Lumenal side of the membrane. Residues isoleucine 179–isoleucine 199 traverse the membrane as a helical segment. Over threonine 200–alanine 212 the chain is Cytoplasmic. The important for recycling of cargo proteins with the sequence motif K-D-E-L from the Golgi to the endoplasmic reticulum stretch occupies residues lysine 204–lysine 207. Residue serine 209 is modified to Phosphoserine; by PKA.

It belongs to the ERD2 family. In terms of assembly, upon ligand binding the receptor oligomerizes and interacts with components of the transport machinery such as ARFGAP1 and ARF1. Phosphorylation by PKA at Ser-209 is required for endoplasmic reticulum retention function.

It localises to the golgi apparatus membrane. It is found in the cytoplasmic vesicle. Its subcellular location is the COPI-coated vesicle membrane. The protein resides in the endoplasmic reticulum membrane. The protein localises to the endoplasmic reticulum-Golgi intermediate compartment membrane. Its function is as follows. Receptor for the C-terminal sequence motif K-D-E-L that is present on endoplasmic reticulum resident proteins and that mediates their recycling from the Golgi back to the endoplasmic reticulum. In Homo sapiens (Human), this protein is ER lumen protein-retaining receptor 1 (KDELR1).